The sequence spans 331 residues: Lipoyl synthase (331 aa).

[4Fe-4S] cluster-binding residues include Cys74, Cys79, Cys85, Cys100, Cys104, Cys107, and Ser314. The Radical SAM core domain occupies 85 to 303 (CFGKGTATFM…ETEAYKMGFT (219 aa)).

This sequence belongs to the radical SAM superfamily. Lipoyl synthase family. It depends on [4Fe-4S] cluster as a cofactor.

It localises to the cytoplasm. The catalysed reaction is [[Fe-S] cluster scaffold protein carrying a second [4Fe-4S](2+) cluster] + N(6)-octanoyl-L-lysyl-[protein] + 2 oxidized [2Fe-2S]-[ferredoxin] + 2 S-adenosyl-L-methionine + 4 H(+) = [[Fe-S] cluster scaffold protein] + N(6)-[(R)-dihydrolipoyl]-L-lysyl-[protein] + 4 Fe(3+) + 2 hydrogen sulfide + 2 5'-deoxyadenosine + 2 L-methionine + 2 reduced [2Fe-2S]-[ferredoxin]. The protein operates within protein modification; protein lipoylation via endogenous pathway; protein N(6)-(lipoyl)lysine from octanoyl-[acyl-carrier-protein]: step 2/2. Functionally, catalyzes the radical-mediated insertion of two sulfur atoms into the C-6 and C-8 positions of the octanoyl moiety bound to the lipoyl domains of lipoate-dependent enzymes, thereby converting the octanoylated domains into lipoylated derivatives. The polypeptide is Lipoyl synthase (Leptothrix cholodnii (strain ATCC 51168 / LMG 8142 / SP-6) (Leptothrix discophora (strain SP-6))).